The following is a 430-amino-acid chain: MHDIRAIRENPAAFDAALALRNLPPVSPEILSLDADRRSRIAAAEAAQAEQNKASKEAGAAKGRGDEAEFQRLRALVTAKKDETARLQAEATALDAKLRELLLAVPNLPLDGVPPGKDEDDNVEIRRWGEPRAFDFAPREHFEIEGVRPGMDFETAAKLSGSRFVVLKGGVARVHRALAQFMLDLHTEEHGLAETWAPVLVLSEMMEGTGQLPKFGEDSYQTREGWWLIPTSEVTLTNTVNGDLVDHASLPRRMVAHSQCFRSEAGSAGRDTSGMLRQHQFEKVEMVSITDAESGVEEHARMTRCAEAVLERLGLPYRTIVLCGGDMGFGARITHDLEVWLPGQGKYREISSVSYCGDFQARRMNARYRPAGGGKPEFVHTLNGSGLAVGRTLIAVLENGQQADGSVKLPEVLHPYLGGRTRLGADGVLA.

The tract at residues 47-66 is disordered; the sequence is AQAEQNKASKEAGAAKGRGD. An L-serine-binding site is contributed by 231-233; sequence TSE. 262 to 264 is an ATP binding site; that stretch reads RSE. Glu285 lines the L-serine pocket. 349–352 is a binding site for ATP; the sequence is EISS. Ser385 is an L-serine binding site.

Belongs to the class-II aminoacyl-tRNA synthetase family. Type-1 seryl-tRNA synthetase subfamily. As to quaternary structure, homodimer. The tRNA molecule binds across the dimer.

The protein resides in the cytoplasm. It catalyses the reaction tRNA(Ser) + L-serine + ATP = L-seryl-tRNA(Ser) + AMP + diphosphate + H(+). It carries out the reaction tRNA(Sec) + L-serine + ATP = L-seryl-tRNA(Sec) + AMP + diphosphate + H(+). The protein operates within aminoacyl-tRNA biosynthesis; selenocysteinyl-tRNA(Sec) biosynthesis; L-seryl-tRNA(Sec) from L-serine and tRNA(Sec): step 1/1. Functionally, catalyzes the attachment of serine to tRNA(Ser). Is also able to aminoacylate tRNA(Sec) with serine, to form the misacylated tRNA L-seryl-tRNA(Sec), which will be further converted into selenocysteinyl-tRNA(Sec). This Paracoccus denitrificans (strain Pd 1222) protein is Serine--tRNA ligase.